The chain runs to 303 residues: UDP-N-acetylenolpyruvoylglucosamine reductase (303 aa).

In terms of domain architecture, FAD-binding PCMH-type spans 28–195 (KTGGPAQYLA…ISATFGLEPG (168 aa)). Residue Arg174 is part of the active site. The active-site Proton donor is Ser224. Residue Glu294 is part of the active site.

This sequence belongs to the MurB family. Requires FAD as cofactor.

The protein resides in the cytoplasm. The catalysed reaction is UDP-N-acetyl-alpha-D-muramate + NADP(+) = UDP-N-acetyl-3-O-(1-carboxyvinyl)-alpha-D-glucosamine + NADPH + H(+). It functions in the pathway cell wall biogenesis; peptidoglycan biosynthesis. Its function is as follows. Cell wall formation. In Lactobacillus gasseri (strain ATCC 33323 / DSM 20243 / BCRC 14619 / CIP 102991 / JCM 1131 / KCTC 3163 / NCIMB 11718 / NCTC 13722 / AM63), this protein is UDP-N-acetylenolpyruvoylglucosamine reductase.